The primary structure comprises 423 residues: Major royal jelly protein 9 (423 aa).

The first 20 residues, 1–20 (MSFNIWWLILYFSIVCQAKA), serve as a signal peptide directing secretion. N-linked (GlcNAc...) asparagine glycans are attached at residues asparagine 110, asparagine 118, asparagine 177, asparagine 196, and asparagine 345.

It belongs to the major royal jelly protein family. As to expression, expressed at very low levels in the hypopharyngeal glands of adult worker bees (at protein level); expression peaks at 12 days post eclosion. Secreted into bee venom in the sting apparatus (at protein level). Expressed in the brains of adult worker bees peaking at 12 days post eclosion (at protein level). Expressed in the spermatheca of adult queen bees (at protein level); expression levels are higher in mated queens than in virgin queens. Along with Mrjp8 expressed at very low levels in the head of worker bees compared to other major royal jelly proteins.

The protein localises to the secreted. Functionally, component of bee sting venom. Component of royal jelly, a substance produced in the hypopharyngeal gland containing proteins, free amino acids, fatty acids, sugars and other nutrients, which is fed to developing larvae by worker nurse bees; may be present only at trace levels. All larvae are fed some royal jelly (also known as worker jelly) early in their development but it forms the principal source of nutrition for larvae destined to become queen bees. Produced in the spermatheca of adult queen bees, along with other major royal jelly proteins, where it may act as a nutrient supply for sperm stored by mated queens, or be involved in energy metabolism. The chain is Major royal jelly protein 9 from Apis mellifera (Honeybee).